We begin with the raw amino-acid sequence, 396 residues long: Glutamyl-tRNA reductase (396 aa).

Substrate is bound by residues 45–48 (TCNR), Ser-101, 106–108 (EDQ), and Gln-112. Cys-46 functions as the Nucleophile in the catalytic mechanism. 177-182 (GFGDVG) lines the NADP(+) pocket.

Belongs to the glutamyl-tRNA reductase family. Homodimer.

It carries out the reaction (S)-4-amino-5-oxopentanoate + tRNA(Glu) + NADP(+) = L-glutamyl-tRNA(Glu) + NADPH + H(+). It functions in the pathway porphyrin-containing compound metabolism; protoporphyrin-IX biosynthesis; 5-aminolevulinate from L-glutamyl-tRNA(Glu): step 1/2. Catalyzes the NADPH-dependent reduction of glutamyl-tRNA(Glu) to glutamate 1-semialdehyde (GSA). The polypeptide is Glutamyl-tRNA reductase (Clostridium acetobutylicum (strain ATCC 824 / DSM 792 / JCM 1419 / IAM 19013 / LMG 5710 / NBRC 13948 / NRRL B-527 / VKM B-1787 / 2291 / W)).